The sequence spans 81 residues: Photosystem I iron-sulfur center (81 aa).

2 4Fe-4S ferredoxin-type domains span residues 2 to 31 and 39 to 68; these read SHAV…MVPW and IASA…VRVY. Residues C11, C14, C17, C21, C48, C51, C54, and C58 each coordinate [4Fe-4S] cluster.

As to quaternary structure, the eukaryotic PSI reaction center is composed of at least 11 subunits. Requires [4Fe-4S] cluster as cofactor.

The protein resides in the plastid. Its subcellular location is the chloroplast thylakoid membrane. It carries out the reaction reduced [plastocyanin] + hnu + oxidized [2Fe-2S]-[ferredoxin] = oxidized [plastocyanin] + reduced [2Fe-2S]-[ferredoxin]. Functionally, apoprotein for the two 4Fe-4S centers FA and FB of photosystem I (PSI); essential for photochemical activity. FB is the terminal electron acceptor of PSI, donating electrons to ferredoxin. The C-terminus interacts with PsaA/B/D and helps assemble the protein into the PSI complex. Required for binding of PsaD and PsaE to PSI. PSI is a plastocyanin/cytochrome c6-ferredoxin oxidoreductase, converting photonic excitation into a charge separation, which transfers an electron from the donor P700 chlorophyll pair to the spectroscopically characterized acceptors A0, A1, FX, FA and FB in turn. This Ostreococcus tauri protein is Photosystem I iron-sulfur center.